A 518-amino-acid polypeptide reads, in one-letter code: Xaa-Pro aminopeptidase 3 (518 aa).

The N-terminal 48 residues, 1–48, are a transit peptide targeting the mitochondrion; the sequence is MNNICKLNKFIISKSSSSLSSTSSKIKTNCLIKNAKMFSSSLNLNRFY. Positions 314, 345, 356, 434, 441, 461, and 485 each coordinate substrate. Mn(2+)-binding residues include Asp345, Asp356, and His434. Residues Glu461 and Glu485 each coordinate Mn(2+).

The protein belongs to the peptidase M24B family. Homodimer. The cofactor is Mn(2+).

The protein resides in the mitochondrion. It localises to the cytoplasm. It catalyses the reaction Release of any N-terminal amino acid, including proline, that is linked to proline, even from a dipeptide or tripeptide.. Functionally, catalyzes the removal of a penultimate prolyl residue from the N-termini of peptides, such as Leu-Pro-Ala. Also shows low activity towards peptides with Ala or Ser at the P1 position. This Dictyostelium discoideum (Social amoeba) protein is Xaa-Pro aminopeptidase 3 (xpnpep3).